The sequence spans 210 residues: NDR1/HIN1-like protein 12 (210 aa).

The helical transmembrane segment at G23–L43 threads the bilayer. An N-linked (GlcNAc...) asparagine glycan is attached at N61.

In terms of assembly, may form oligomers or be a component of larger protein complex in plasma membranes. Expressed in leaves, stems and flowers, and, to a lower extent, in siliques and roots.

The protein resides in the cell membrane. In terms of biological role, may play a role in plant immunity. The polypeptide is NDR1/HIN1-like protein 12 (Arabidopsis thaliana (Mouse-ear cress)).